The chain runs to 575 residues: Glycine--tRNA ligase (575 aa).

Substrate-binding residues include R96 and E162. ATP contacts are provided by residues 194–196 (RNE), 204–209 (IRLREF), 327–328 (EC), and 450–453 (GIDR). A substrate-binding site is contributed by 209–213 (FTQAE). 446-450 (EPSYG) provides a ligand contact to substrate.

It belongs to the class-II aminoacyl-tRNA synthetase family.

The protein resides in the cytoplasm. It carries out the reaction tRNA(Gly) + glycine + ATP = glycyl-tRNA(Gly) + AMP + diphosphate. In terms of biological role, catalyzes the attachment of glycine to tRNA(Gly). This Methanococcus maripaludis (strain C5 / ATCC BAA-1333) protein is Glycine--tRNA ligase.